Consider the following 388-residue polypeptide: Protein TsgA homolog (388 aa).

The next 12 helical transmembrane spans lie at 11–31 (WISFLSYAFTGALVVVTGMIM), 50–70 (TFLNAGILVSIFINSWLIEII), 77–97 (IFSFILTIIAVIGIVLCNSIF), 101–121 (INMFILGLVSGITMSIGTFII), 133–153 (LLLLTDSFFSMSGMIFPIVTA), 160–180 (IIWYWSYICIGAIYLLIFLLT), 206–226 (VFLLSISALLYILGQLGFISW), 244–264 (SLVSGFWMSYMLGMWFFSFII), 268–288 (NLYRMFIFLTSMSTILMYCFI), 298–318 (YIIISLGFFSSAIYTIIITLA), 332–352 (LILLFGTIGTFLTFIITSPIV), and 360–380 (TLISSNILYGIVFFLSILIYF).

It belongs to the major facilitator superfamily. TsgA family.

Its subcellular location is the cell membrane. The protein is Protein TsgA homolog of Buchnera aphidicola subsp. Acyrthosiphon pisum (strain 5A).